Here is a 260-residue protein sequence, read N- to C-terminus: Carbonic anhydrase 2 (260 aa).

Residues 3-259 (HGWGYADHNG…LKDRKVCASF (257 aa)) form the Alpha-carbonic anhydrase domain. Histidine 64 (proton donor/acceptor) is an active-site residue. Zn(2+)-binding residues include histidine 94, histidine 96, and histidine 119. 198-199 (TT) contributes to the substrate binding site.

The protein belongs to the alpha-carbonic anhydrase family. Zn(2+) serves as cofactor.

Its subcellular location is the cytoplasm. The catalysed reaction is hydrogencarbonate + H(+) = CO2 + H2O. Functionally, catalyzes the reversible hydration of carbon dioxide. This is Carbonic anhydrase 2 (ca2) from Pseudaspius hakonensis (Big-scaled redfin).